The chain runs to 355 residues: Type II methyltransferase M.MthZI (355 aa).

The protein belongs to the N(4)/N(6)-methyltransferase family. N(4) subfamily.

The enzyme catalyses a 2'-deoxycytidine in DNA + S-adenosyl-L-methionine = an N(4)-methyl-2'-deoxycytidine in DNA + S-adenosyl-L-homocysteine + H(+). A beta subtype methylase that recognizes the double-stranded sequence 5'-CTAG-3', methylates C-1 on both strands, and protects the DNA from cleavage by the MthZI endonuclease. The sequence is that of Type II methyltransferase M.MthZI from Methanothermobacter thermautotrophicus (Methanobacterium thermoformicicum).